Consider the following 533-residue polypeptide: DEAD-box ATP-dependent RNA helicase CshA (533 aa).

A Q motif motif is present at residues 2–30 (TTFRELGLSDSLLQSVESMGFEEATPIQA). One can recognise a Helicase ATP-binding domain in the interval 33–203 (IPHALQGKDI…ERFMTEPQHI (171 aa)). 46–53 (AQTGTGKT) contacts ATP. Positions 151 to 154 (DEAD) match the DEAD box motif. One can recognise a Helicase C-terminal domain in the interval 214 to 374 (NIQQFYLEVQ…RMDAPTLDEA (161 aa)). Residues 428–533 (TTPIALTSEP…ERKHHSRPQA (106 aa)) are disordered. Basic and acidic residues predominate over residues 458–512 (DGNRNRSRDGRGGGDGRNRDRNRDGRNRDGNRDRNRDGNRDRNRDGGSRGRRGEG). Residues 524–533 (ERKHHSRPQA) are compositionally biased toward basic residues.

Belongs to the DEAD box helicase family. CshA subfamily. As to quaternary structure, oligomerizes, may be a member of the RNA degradosome.

It localises to the cytoplasm. It catalyses the reaction ATP + H2O = ADP + phosphate + H(+). Functionally, DEAD-box RNA helicase possibly involved in RNA degradation. May work in conjunction with the cold shock proteins to ensure proper initiation of transcription at low and optimal temperatures. Unwinds dsRNA in both 5'- and 3'-directions and shows RNA-dependent ATPase activity. Probably has a somewhat redundant function with cshB, as cshA can partially complement the growth effects of a cshB deletion. Plays a role in adaptation to cold, oxididant and pH stress. This Bacillus cereus (strain ATCC 14579 / DSM 31 / CCUG 7414 / JCM 2152 / NBRC 15305 / NCIMB 9373 / NCTC 2599 / NRRL B-3711) protein is DEAD-box ATP-dependent RNA helicase CshA.